Consider the following 97-residue polypeptide: Small ribosomal subunit protein bS6 (97 aa).

The protein belongs to the bacterial ribosomal protein bS6 family.

Binds together with bS18 to 16S ribosomal RNA. This is Small ribosomal subunit protein bS6 from Lactococcus lactis subsp. cremoris (strain MG1363).